Consider the following 166-residue polypeptide: Protein-export protein SecB (166 aa).

Belongs to the SecB family. Homotetramer, a dimer of dimers. One homotetramer interacts with 1 SecA dimer.

Its subcellular location is the cytoplasm. In terms of biological role, one of the proteins required for the normal export of preproteins out of the cell cytoplasm. It is a molecular chaperone that binds to a subset of precursor proteins, maintaining them in a translocation-competent state. It also specifically binds to its receptor SecA. This Actinobacillus succinogenes (strain ATCC 55618 / DSM 22257 / CCUG 43843 / 130Z) protein is Protein-export protein SecB.